The following is a 1186-amino-acid chain: uncharacterized protein (1186 aa).

This is an uncharacterized protein from Acheta domesticus (House cricket).